A 205-amino-acid polypeptide reads, in one-letter code: Small ribosomal subunit protein uS4 (205 aa).

The S4 RNA-binding domain maps to Ser-94 to Val-157.

It belongs to the universal ribosomal protein uS4 family. Part of the 30S ribosomal subunit. Contacts protein S5. The interaction surface between S4 and S5 is involved in control of translational fidelity.

Its function is as follows. One of the primary rRNA binding proteins, it binds directly to 16S rRNA where it nucleates assembly of the body of the 30S subunit. With S5 and S12 plays an important role in translational accuracy. This chain is Small ribosomal subunit protein uS4, found in Rickettsia felis (strain ATCC VR-1525 / URRWXCal2) (Rickettsia azadi).